Here is a 236-residue protein sequence, read N- to C-terminus: UPF0257 lipoprotein YnfC (236 aa).

Positions 1–16 (MKYKLLPCLLAILLTG) are cleaved as a signal peptide. Residue C17 is the site of N-palmitoyl cysteine attachment. C17 carries S-diacylglycerol cysteine lipidation.

The protein belongs to the UPF0257 family.

The protein resides in the cell membrane. This Escherichia coli O81 (strain ED1a) protein is UPF0257 lipoprotein YnfC.